The sequence spans 424 residues: Protein-glutamate methylesterase/protein-glutamine glutaminase (424 aa).

Residues 6-123 (RVLVVDDSAF…SLDDFTRQLT (118 aa)) enclose the Response regulatory domain. Asp-57 bears the 4-aspartylphosphate mark. A disordered region spans residues 177 to 210 (SRLSPGRSPGGKEGVAGAVSAGSTRGEAIRPGKG). Residues 229–423 (RRPGIEVVAI…PAIVALVTGA (195 aa)) enclose the CheB-type methylesterase domain. Residues Ser-241, His-268, and Asp-365 contribute to the active site.

The protein belongs to the CheB family. Phosphorylated by CheA. Phosphorylation of the N-terminal regulatory domain activates the methylesterase activity.

The protein resides in the cytoplasm. The enzyme catalyses [protein]-L-glutamate 5-O-methyl ester + H2O = L-glutamyl-[protein] + methanol + H(+). It catalyses the reaction L-glutaminyl-[protein] + H2O = L-glutamyl-[protein] + NH4(+). In terms of biological role, involved in chemotaxis. Part of a chemotaxis signal transduction system that modulates chemotaxis in response to various stimuli. Catalyzes the demethylation of specific methylglutamate residues introduced into the chemoreceptors (methyl-accepting chemotaxis proteins or MCP) by CheR. Also mediates the irreversible deamidation of specific glutamine residues to glutamic acid. The chain is Protein-glutamate methylesterase/protein-glutamine glutaminase from Moorella thermoacetica (strain ATCC 39073 / JCM 9320).